The primary structure comprises 420 residues: Isocitrate dehydrogenase [NADP] (420 aa).

NADP(+) contacts are provided by residues 75–77 (TIT) and R82. T77 provides a ligand contact to substrate. Substrate is bound by residues 94–100 (SPNGTIR), R109, and R132. Mn(2+) is bound at residue D252. An NADP(+)-binding site is contributed by K260. Residue D275 participates in Mn(2+) binding. NADP(+) is bound by residues 310 to 315 (GTVTRH) and N328.

It belongs to the isocitrate and isopropylmalate dehydrogenases family. Mg(2+) is required as a cofactor. The cofactor is Mn(2+).

It carries out the reaction D-threo-isocitrate + NADP(+) = 2-oxoglutarate + CO2 + NADPH. In terms of biological role, may function in the production of NADPH for fatty acid and sterol synthesis. This is Isocitrate dehydrogenase [NADP] (IDP3) from Saccharomyces cerevisiae (strain ATCC 204508 / S288c) (Baker's yeast).